Here is a 408-residue protein sequence, read N- to C-terminus: MIPPEQPQQQLQPPSPAPPNHVVTTIENLPAEGSGGGGSLSASSRAGVRQRIRKVLNREMLISVALGQVLSLLICGIGLTSKYLSEDFHANTPVFQSFLNYILLFLVYTTTLAVRQGEENLLAILRRRWWKYMILGLIDLEANYLVVKAYQYTTLTSIQLLDCFVIPVVILLSWFFLLIRYKAVHFIGIVVCILGMGCMVGADVLVGRHQGAGENKLVGDLLVLGGATLYGISNVWEEYIIRTLSRVEFLGMIGLFGAFFSGIQLAIMEHKELLKVPWDWQIGLLYVGFSACMFGLYSFMPVVIKKTSATSVNLSLLTADLYSLFCGLFLFHYKFSGLYLLSFFTILIGLVLYSSTSTYIAQDPRVYKQFRNPSGPVVDLPTTAQVEPSVTYTSLGQETEEEPHVRVA.

The interval 1–21 is disordered; that stretch reads MIPPEQPQQQLQPPSPAPPNH. Transmembrane regions (helical) follow at residues 60–80, 94–114, 129–147, 158–178, 186–206, 221–241, 247–267, 284–304, 311–331, and 335–355; these read MLIS…IGLT, VFQS…TLAV, WWKY…YLVV, IQLL…FFLL, FIGI…DVLV, LLVL…EYII, VEFL…QLAI, LLYV…PVVI, SVNL…LFLF, and FSGL…LYSS.

The protein belongs to the SLC35F solute transporter family.

The protein resides in the cytoplasmic vesicle. Its subcellular location is the secretory vesicle. It localises to the synaptic vesicle membrane. Its function is as follows. Putative solute transporter. The protein is Solute carrier family 35 member F1 (SLC35F1) of Homo sapiens (Human).